A 471-amino-acid polypeptide reads, in one-letter code: Sulfate adenylyltransferase subunit 1 (471 aa).

The 218-residue stretch at K22–L239 folds into the tr-type G domain. The interval G31 to S38 is G1. G31–S38 provides a ligand contact to GTP. Positions G89–D93 are G2. The tract at residues D110–G113 is G3. Residues D110 to H114 and N165 to D168 contribute to the GTP site. The tract at residues N165–D168 is G4. Positions S202–L204 are G5.

The protein belongs to the TRAFAC class translation factor GTPase superfamily. Classic translation factor GTPase family. CysN/NodQ subfamily. Heterodimer composed of CysD, the smaller subunit, and CysN.

The enzyme catalyses sulfate + ATP + H(+) = adenosine 5'-phosphosulfate + diphosphate. The protein operates within sulfur metabolism; hydrogen sulfide biosynthesis; sulfite from sulfate: step 1/3. In terms of biological role, with CysD forms the ATP sulfurylase (ATPS) that catalyzes the adenylation of sulfate producing adenosine 5'-phosphosulfate (APS) and diphosphate, the first enzymatic step in sulfur assimilation pathway. APS synthesis involves the formation of a high-energy phosphoric-sulfuric acid anhydride bond driven by GTP hydrolysis by CysN coupled to ATP hydrolysis by CysD. This chain is Sulfate adenylyltransferase subunit 1, found in Alteromonas mediterranea (strain DSM 17117 / CIP 110805 / LMG 28347 / Deep ecotype).